Here is a 448-residue protein sequence, read N- to C-terminus: MREFMQYVRNAFYGATGWSEDNSYKDLNVTARELIDFPLPRGIRLSLSSLATPHFATSYQLCNVGVVDGSISYLHSSVPLAAVPAQSNKIPLGALMRSYRGLHQLGSRGGTPWSWETGPQIGTIPQVPAVADMGQIPNKDKSSLLYGRLYLPQSLLEAMVIKRFSPALQVQISAVSEQSLRNGGTMLSVVQYDRGKYGVEGLYSTDGGLLGLRGLYNFGGDASVAVMSSQNGTGSPESTEKERIYGRFSAGGEMYYGTLNKSGGMSLGARFATLPTHKGTPLTATLTINPLMGNINTTYAVLAKDFLAMATRMEFNAYSYESDWAVGLELWSNRRPAGFLLGAEPSLDLESDQPELPSKKERSFQAKMEWRLDDPEPEPEPVKIAEKPTEGKEEYLGVFKARLSSNLDLGLVWEGRAKSLIFSLGTGVDLQRLGEPFRSLGLEVQYSS.

The protein belongs to the MDM10 family. As to quaternary structure, component of the ER-mitochondria encounter structure (ERMES) or MDM complex, composed of MMM1, MDM10, MDM12 and MDM34. Associates with the mitochondrial outer membrane sorting assembly machinery SAM(core) complex.

Its subcellular location is the mitochondrion outer membrane. Component of the ERMES/MDM complex, which serves as a molecular tether to connect the endoplasmic reticulum and mitochondria. Components of this complex are involved in the control of mitochondrial shape and protein biogenesis and may function in phospholipid exchange. MDM10 is involved in the late assembly steps of the general translocase of the mitochondrial outer membrane (TOM complex). Functions in the TOM40-specific route of the assembly of outer membrane beta-barrel proteins, including the association of TOM40 with the receptor TOM22 and small TOM proteins. Can associate with the SAM(core) complex as well as the MDM12-MMM1 complex, both involved in late steps of the major beta-barrel assembly pathway, that is responsible for biogenesis of all outer membrane beta-barrel proteins. May act as a switch that shuttles between both complexes and channels precursor proteins into the TOM40-specific pathway. Plays a role in mitochondrial morphology and in the inheritance of mitochondria. This chain is Mitochondrial distribution and morphology protein 10, found in Podospora anserina (strain S / ATCC MYA-4624 / DSM 980 / FGSC 10383) (Pleurage anserina).